The sequence spans 172 residues: 3-hydroxydecanoyl-[acyl-carrier-protein] dehydratase (172 aa).

The active site involves His-71.

The protein belongs to the thioester dehydratase family. FabA subfamily. As to quaternary structure, homodimer.

The protein resides in the cytoplasm. The enzyme catalyses a (3R)-hydroxyacyl-[ACP] = a (2E)-enoyl-[ACP] + H2O. It catalyses the reaction (3R)-hydroxydecanoyl-[ACP] = (2E)-decenoyl-[ACP] + H2O. It carries out the reaction (2E)-decenoyl-[ACP] = (3Z)-decenoyl-[ACP]. The protein operates within lipid metabolism; fatty acid biosynthesis. Functionally, necessary for the introduction of cis unsaturation into fatty acids. Catalyzes the dehydration of (3R)-3-hydroxydecanoyl-ACP to E-(2)-decenoyl-ACP and then its isomerization to Z-(3)-decenoyl-ACP. Can catalyze the dehydratase reaction for beta-hydroxyacyl-ACPs with saturated chain lengths up to 16:0, being most active on intermediate chain length. The polypeptide is 3-hydroxydecanoyl-[acyl-carrier-protein] dehydratase (Pectobacterium carotovorum subsp. carotovorum (strain PC1)).